The chain runs to 362 residues: 3-dehydroquinate synthase (362 aa).

NAD(+)-binding positions include 70–75 (DGEKYK), 104–108 (GVIGD), 128–129 (TT), Lys141, Lys150, and 168–171 (TLNT). Residues Glu183, His246, and His263 each coordinate Zn(2+).

It belongs to the sugar phosphate cyclases superfamily. Dehydroquinate synthase family. Requires Co(2+) as cofactor. The cofactor is Zn(2+). NAD(+) serves as cofactor.

It localises to the cytoplasm. The enzyme catalyses 7-phospho-2-dehydro-3-deoxy-D-arabino-heptonate = 3-dehydroquinate + phosphate. It functions in the pathway metabolic intermediate biosynthesis; chorismate biosynthesis; chorismate from D-erythrose 4-phosphate and phosphoenolpyruvate: step 2/7. In terms of biological role, catalyzes the conversion of 3-deoxy-D-arabino-heptulosonate 7-phosphate (DAHP) to dehydroquinate (DHQ). The chain is 3-dehydroquinate synthase from Haemophilus influenzae (strain 86-028NP).